A 293-amino-acid chain; its full sequence is MQIIHTIEELRQALAPARQQGKKIGFVPTMGYLHKGHLELVRRARVENDVTLVSIFVNPLQFGANEDLGRYPRDLERDAGLLHDAQVDYLFAPTVSDMYPRPMQTVVDVPPLGNQIEGEARPGHFAGVATVVSKLFNIVGPDAAYFGEKDFQQLVIIRRMVDDMAIPVRIVGVETVREDDGLACSSRNVYLTPEQRRAAIIVPQALDEADRLYRSGMDDPDALEAAIRTFIGRQPLAVPEVIAIRDPETLERLPALQGRPILVALFVRVGATRLLDNRVIGHAAPQITQERAA.

30–37 (MGYLHKGH) contributes to the ATP binding site. Residue His37 is the Proton donor of the active site. Gln61 is a binding site for (R)-pantoate. Gln61 provides a ligand contact to beta-alanine. 147–150 (GEKD) lines the ATP pocket. Residue Gln153 coordinates (R)-pantoate. ATP is bound by residues Val176 and 184–187 (CSSR).

This sequence belongs to the pantothenate synthetase family. As to quaternary structure, homodimer.

It localises to the cytoplasm. It carries out the reaction (R)-pantoate + beta-alanine + ATP = (R)-pantothenate + AMP + diphosphate + H(+). The protein operates within cofactor biosynthesis; (R)-pantothenate biosynthesis; (R)-pantothenate from (R)-pantoate and beta-alanine: step 1/1. Catalyzes the condensation of pantoate with beta-alanine in an ATP-dependent reaction via a pantoyl-adenylate intermediate. This Brucella abortus (strain S19) protein is Pantothenate synthetase.